A 212-amino-acid polypeptide reads, in one-letter code: Large ribosomal subunit protein uL3 (212 aa).

Position 154 is an N5-methylglutamine (Q154).

It belongs to the universal ribosomal protein uL3 family. In terms of assembly, part of the 50S ribosomal subunit. Forms a cluster with proteins L14 and L19. Post-translationally, methylated by PrmB.

One of the primary rRNA binding proteins, it binds directly near the 3'-end of the 23S rRNA, where it nucleates assembly of the 50S subunit. The protein is Large ribosomal subunit protein uL3 of Hydrogenovibrio crunogenus (strain DSM 25203 / XCL-2) (Thiomicrospira crunogena).